The chain runs to 271 residues: Purine nucleoside phosphorylase 1 (271 aa).

Phosphate is bound by residues Ser-28, His-59, 79 to 81, and Ala-111; that span reads RFH. At Ser-28 the chain carries Phosphoserine. A purine D-ribonucleoside is bound at residue Glu-191. Ser-210 is a binding site for phosphate. Asn-233 serves as a coordination point for a purine D-ribonucleoside.

Belongs to the PNP/MTAP phosphorylase family. Homotrimer.

It carries out the reaction a purine 2'-deoxy-D-ribonucleoside + phosphate = a purine nucleobase + 2-deoxy-alpha-D-ribose 1-phosphate. Its pathway is purine metabolism; purine nucleoside salvage. In terms of biological role, the purine nucleoside phosphorylases catalyze the phosphorolytic breakdown of the N-glycosidic bond in the beta-(deoxy)ribonucleoside molecules, with the formation of the corresponding free purine bases and pentose-1-phosphate. Cleaves guanosine, inosine, 2'-deoxyguanosine and 2'-deoxyinosine. This is Purine nucleoside phosphorylase 1 (punA) from Bacillus subtilis (strain 168).